The sequence spans 366 residues: tRNA(Met) cytidine acetate ligase (366 aa).

Residues 7–20 (VAEF…HKYL), glycine 96, asparagine 152, and arginine 175 each bind ATP.

The protein belongs to the TmcAL family.

Its subcellular location is the cytoplasm. The enzyme catalyses cytidine(34) in elongator tRNA(Met) + acetate + ATP = N(4)-acetylcytidine(34) in elongator tRNA(Met) + AMP + diphosphate. Catalyzes the formation of N(4)-acetylcytidine (ac(4)C) at the wobble position of elongator tRNA(Met), using acetate and ATP as substrates. First activates an acetate ion to form acetyladenylate (Ac-AMP) and then transfers the acetyl group to tRNA to form ac(4)C34. This chain is tRNA(Met) cytidine acetate ligase, found in Streptococcus uberis (strain ATCC BAA-854 / 0140J).